The following is a 146-amino-acid chain: Hemoglobin subunit beta-2 (146 aa).

Residues 2–146 (EWTDFERATI…VVSSLGRQYH (145 aa)) enclose the Globin domain. Heme b is bound by residues H63 and H92.

This sequence belongs to the globin family. Hb 2 is a heterotetramer of two alpha-2 and two beta-2 chains. As to expression, red blood cells.

In terms of biological role, involved in oxygen transport from gills to the various peripheral tissues. The sequence is that of Hemoglobin subunit beta-2 (hbb2) from Gobionotothen gibberifrons (Humped rockcod).